The chain runs to 447 residues: N-succinylarginine dihydrolase (447 aa).

Residues 19–28 (AGLSVGNKAS), Asn-110, and 137–138 (HR) each bind substrate. Glu-174 is an active-site residue. Arg-213 contacts substrate. His-249 is a catalytic residue. 2 residues coordinate substrate: Asp-251 and Asn-365. The active-site Nucleophile is the Cys-371.

The protein belongs to the succinylarginine dihydrolase family. As to quaternary structure, homodimer.

It carries out the reaction N(2)-succinyl-L-arginine + 2 H2O + 2 H(+) = N(2)-succinyl-L-ornithine + 2 NH4(+) + CO2. It functions in the pathway amino-acid degradation; L-arginine degradation via AST pathway; L-glutamate and succinate from L-arginine: step 2/5. In terms of biological role, catalyzes the hydrolysis of N(2)-succinylarginine into N(2)-succinylornithine, ammonia and CO(2). The polypeptide is N-succinylarginine dihydrolase (Photorhabdus laumondii subsp. laumondii (strain DSM 15139 / CIP 105565 / TT01) (Photorhabdus luminescens subsp. laumondii)).